A 588-amino-acid chain; its full sequence is ATP-dependent lipid A-core flippase (588 aa).

Transmembrane regions (helical) follow at residues 23–43, 56–76, 141–161, 162–182, 257–277, and 278–298; these read FWPVLLLGVLANILYSGIDAG, FITIDLDFVKQIPLIVLIGIT, DALTDFIQNICLVIGLLTVMM, VICWQLSLMFLLTIPFVGIIV, LVIAIGIAMIIMAAIHLSTVI, and TISAGSFLAIIAAMLQLIKPM. Residues 28-310 enclose the ABC transmembrane type-1 domain; it reads LLGVLANILY…LTTLNATIQR (283 aa). An ABC transporter domain is found at 342-576; sequence IEFKHVYHAY…DGHYAQLYKV (235 aa). Residue 375 to 382 coordinates ATP; it reads GHSGSGKT.

The protein belongs to the ABC transporter superfamily. Lipid exporter (TC 3.A.1.106) family. Homodimer.

The protein localises to the cell inner membrane. The catalysed reaction is ATP + H2O + lipid A-core oligosaccharideSide 1 = ADP + phosphate + lipid A-core oligosaccharideSide 2.. Its function is as follows. Involved in lipopolysaccharide (LPS) biosynthesis. Translocates lipid A-core from the inner to the outer leaflet of the inner membrane. Transmembrane domains (TMD) form a pore in the inner membrane and the ATP-binding domain (NBD) is responsible for energy generation. This is ATP-dependent lipid A-core flippase from Legionella pneumophila (strain Paris).